We begin with the raw amino-acid sequence, 92 residues long: MAKVCIAAYVYGVVQGVGFRYSTQRQALALGVTGYARNCDDGSVEVVAYGEQQAVEQLMEWIKQGGPRGARVDRLLTEPYPATPFETFKIRY.

One can recognise an Acylphosphatase-like domain in the interval 5 to 92; that stretch reads CIAAYVYGVV…TPFETFKIRY (88 aa). Active-site residues include Arg-20 and Asn-38.

This sequence belongs to the acylphosphatase family.

It catalyses the reaction an acyl phosphate + H2O = a carboxylate + phosphate + H(+). The chain is Acylphosphatase (acyP) from Yersinia enterocolitica serotype O:8 / biotype 1B (strain NCTC 13174 / 8081).